We begin with the raw amino-acid sequence, 1103 residues long: Voltage-dependent calcium channel subunit alpha-2/delta-1 (1103 aa).

The N-terminal stretch at 1–24 (MAAGCLLALTLTLFQSGLIGPSSE) is a signal peptide. Residues 25–1073 (EPFPSPVTIK…VLEDYTDCGG (1049 aa)) are Extracellular-facing. Asn92 is a glycosylation site (N-linked (GlcNAc...) asparagine). Ser119 bears the Phosphoserine mark. N-linked (GlcNAc...) asparagine glycans are attached at residues Asn136 and Asn184. In terms of domain architecture, VWFA spans 253–430 (DMLILVDVSG…INTQEYLDVL (178 aa)). Residues Asp259, Ser261, and Ser263 each contribute to the a divalent metal cation site. The short motif at 259–263 (DVSGS) is the MIDAS-like motif element. Asn324 and Asn348 each carry an N-linked (GlcNAc...) asparagine glycan. An intrachain disulfide couples Cys404 to Cys1059. Positions 446-537 (WTNVYLDALE…QPKPIGVGIP (92 aa)) constitute a Cache domain. N-linked (GlcNAc...) asparagine glycosylation is found at Asn613, Asn781, and Asn888. The chain crosses the membrane as a helical span at residues 1074–1094 (VSGLNPSLWSIFGLQFILLWL). Over 1095–1103 (VSGSRHYLL) the chain is Cytoplasmic.

Belongs to the calcium channel subunit alpha-2/delta family. In terms of assembly, dimer formed of alpha-2-1 and delta-1 chains; disulfide-linked. Voltage-dependent calcium channels are multisubunit complexes, consisting of alpha-1 (CACNA1), alpha-2 (CACNA2D), beta (CACNB) and delta (CACNA2D) subunits in a 1:1:1:1 ratio. In terms of processing, proteolytically processed into subunits alpha-2-1 and delta-1 that are disulfide-linked. As to expression, isoform 2A is expressed in skeletal muscle and aorta. Isoform 2B is expressed in brain. Isoform 2C is expressed in heart. Isoform 2D is expressed in heart and smooth muscle. Isoform 2E is expressed in smooth muscle. All five isoforms are expressed in the cardiovascular system.

It is found in the membrane. Its subcellular location is the cell membrane. Functionally, the alpha-2/delta subunit of voltage-dependent calcium channels regulates calcium current density and activation/inactivation kinetics of the calcium channel. Plays an important role in excitation-contraction coupling. This is Voltage-dependent calcium channel subunit alpha-2/delta-1 (Cacna2d1) from Mus musculus (Mouse).